A 339-amino-acid polypeptide reads, in one-letter code: UDP-galactose transporter homolog 1 (339 aa).

Residues 1–4 (MAGS) lie on the Lumenal side of the membrane. A helical transmembrane segment spans residues 5 to 25 (TSSLVICAIGIYATFLTWALV). Over 26 to 42 (QEPLATRTWPNSMGKFQ) the chain is Cytoplasmic. Residues 43-63 (FPNVISLIQASVAMMMGYLYL) form a helical membrane-spanning segment. Topologically, residues 64–106 (NWKKVEYPPRKMIKDHWKQLMLISFTQSSSGPLATTSLKHVDY) are lumenal. The helical transmembrane segment at 107-127 (LTYMLAKSCKMIPVLLVHLLL) threads the bilayer. Topologically, residues 128 to 136 (YRTPIASQK) are cytoplasmic. A helical membrane pass occupies residues 137 to 157 (KVVALLVSLGVTIFTIGGNDG). The Lumenal portion of the chain corresponds to 158-174 (KKLKRSFNESGNDNKLQ). Residue asparagine 165 is glycosylated (N-linked (GlcNAc...) asparagine). A helical membrane pass occupies residues 175 to 192 (GFGLLFSSLFLDGLTNAT). Topologically, residues 193 to 214 (QDKLLKANKAKEKGKQTLITGA) are cytoplasmic. A helical transmembrane segment spans residues 215-235 (HLMFTLNLFVILWNILYFIVI). The Lumenal segment spans residues 236–245 (DCKQWDNAVS). A helical membrane pass occupies residues 246 to 266 (VLTMDPQVWGYLMLYSFCGAM). The Cytoplasmic segment spans residues 267 to 280 (GQCFIFYTLEQFGS). A helical membrane pass occupies residues 281-303 (LVLIMITVTRKMVSMILSIIVFG). Residues 304–307 (KSVR) are Lumenal-facing. The chain crosses the membrane as a helical span at residues 308–327 (FQQWVGMFIVFGGITWEALN). The Cytoplasmic portion of the chain corresponds to 328-339 (KKKANIPKAKSA).

This sequence belongs to the nucleotide-sugar transporter family. SLC35B subfamily.

It localises to the endoplasmic reticulum membrane. Its function is as follows. May be involved in specific transport of UDP-Gal from the cytosol to the Golgi lumen. Involved in the maintenance of optimal conditions for the folding of secretory pathway proteins in the endoplasmic reticulum. Overexpression confers resistance to the immunosuppressive drug, leflunomide. This chain is UDP-galactose transporter homolog 1 (HUT1), found in Saccharomyces cerevisiae (strain ATCC 204508 / S288c) (Baker's yeast).